Here is a 389-residue protein sequence, read N- to C-terminus: D-alanyl-D-alanine carboxypeptidase DacF (389 aa).

Positions 1–23 (MKRLLSTLLIGIMLLTFAPSAFA) are cleaved as a signal peptide. The active-site Acyl-ester intermediate is S64. The active-site Proton acceptor is the K67. The active site involves S124. K230 provides a ligand contact to substrate.

This sequence belongs to the peptidase S11 family.

The protein resides in the secreted. It catalyses the reaction Preferential cleavage: (Ac)2-L-Lys-D-Ala-|-D-Ala. Also transpeptidation of peptidyl-alanyl moieties that are N-acyl substituents of D-alanine.. The protein operates within cell wall biogenesis; peptidoglycan biosynthesis. In terms of biological role, removes C-terminal D-alanyl residues from sugar-peptide cell wall precursors. The chain is D-alanyl-D-alanine carboxypeptidase DacF (dacF) from Bacillus subtilis (strain 168).